The following is a 247-amino-acid chain: Large ribosomal subunit protein uL30z (247 aa).

It belongs to the universal ribosomal protein uL30 family.

The chain is Large ribosomal subunit protein uL30z (RPL7A) from Arabidopsis thaliana (Mouse-ear cress).